A 264-amino-acid chain; its full sequence is S-adenosylmethionine decarboxylase proenzyme (264 aa).

The Schiff-base intermediate with substrate; via pyruvic acid role is filled by Ser112. The residue at position 112 (Ser112) is a Pyruvic acid (Ser); by autocatalysis. The active-site Proton acceptor; for processing activity is the His117. The active-site Proton donor; for catalytic activity is the Cys140.

Belongs to the prokaryotic AdoMetDC family. Type 2 subfamily. In terms of assembly, heterooctamer of four alpha and four beta chains arranged as a tetramer of alpha/beta heterodimers. It depends on pyruvate as a cofactor. In terms of processing, is synthesized initially as an inactive proenzyme. Formation of the active enzyme involves a self-maturation process in which the active site pyruvoyl group is generated from an internal serine residue via an autocatalytic post-translational modification. Two non-identical subunits are generated from the proenzyme in this reaction, and the pyruvate is formed at the N-terminus of the alpha chain, which is derived from the carboxyl end of the proenzyme. The post-translation cleavage follows an unusual pathway, termed non-hydrolytic serinolysis, in which the side chain hydroxyl group of the serine supplies its oxygen atom to form the C-terminus of the beta chain, while the remainder of the serine residue undergoes an oxidative deamination to produce ammonia and the pyruvoyl group blocking the N-terminus of the alpha chain.

It carries out the reaction S-adenosyl-L-methionine + H(+) = S-adenosyl 3-(methylsulfanyl)propylamine + CO2. Its pathway is amine and polyamine biosynthesis; S-adenosylmethioninamine biosynthesis; S-adenosylmethioninamine from S-adenosyl-L-methionine: step 1/1. Catalyzes the decarboxylation of S-adenosylmethionine to S-adenosylmethioninamine (dcAdoMet), the propylamine donor required for the synthesis of the polyamines spermine and spermidine from the diamine putrescine. The polypeptide is S-adenosylmethionine decarboxylase proenzyme (Serratia proteamaculans (strain 568)).